The primary structure comprises 184 residues: Orotate phosphoribosyltransferase (184 aa).

Residues Arg99, Lys100, Lys103, His105, and 125-133 (EDTTTTGNS) contribute to the 5-phospho-alpha-D-ribose 1-diphosphate site. 2 residues coordinate orotate: Thr129 and Arg157.

It belongs to the purine/pyrimidine phosphoribosyltransferase family. PyrE subfamily. Homodimer. The cofactor is Mg(2+).

It catalyses the reaction orotidine 5'-phosphate + diphosphate = orotate + 5-phospho-alpha-D-ribose 1-diphosphate. It participates in pyrimidine metabolism; UMP biosynthesis via de novo pathway; UMP from orotate: step 1/2. Catalyzes the transfer of a ribosyl phosphate group from 5-phosphoribose 1-diphosphate to orotate, leading to the formation of orotidine monophosphate (OMP). This chain is Orotate phosphoribosyltransferase, found in Corynebacterium glutamicum (strain R).